A 64-amino-acid polypeptide reads, in one-letter code: Large ribosomal subunit protein bL35 (64 aa).

The protein belongs to the bacterial ribosomal protein bL35 family.

In Coxiella burnetii (strain RSA 331 / Henzerling II), this protein is Large ribosomal subunit protein bL35.